Reading from the N-terminus, the 1388-residue chain is DNA-directed RNA polymerase subunit beta (1388 aa).

The protein belongs to the RNA polymerase beta chain family. The RNAP catalytic core consists of 2 alpha, 1 beta, 1 beta' and 1 omega subunit. When a sigma factor is associated with the core the holoenzyme is formed, which can initiate transcription.

It catalyses the reaction RNA(n) + a ribonucleoside 5'-triphosphate = RNA(n+1) + diphosphate. DNA-dependent RNA polymerase catalyzes the transcription of DNA into RNA using the four ribonucleoside triphosphates as substrates. This is DNA-directed RNA polymerase subunit beta from Stenotrophomonas maltophilia (strain K279a).